The sequence spans 202 residues: Sterile alpha motif domain-containing protein 10 (202 aa).

The SAM domain occupies 118 to 184 (WSQQDVCKWL…LQQVLRLQVR (67 aa)).

The sequence is that of Sterile alpha motif domain-containing protein 10 (SAMD10) from Homo sapiens (Human).